A 236-amino-acid chain; its full sequence is HTH-type transcriptional regulator SACE_5812 (236 aa).

Residues 30-90 (LLTQDKIVSA…LALDAVFGEV (61 aa)) form the HTH tetR-type domain. Residues 53–72 (SMRKLADRLQAHATSLYWHV) constitute a DNA-binding region (H-T-H motif).

Its function is as follows. Transcriptional regulator that inhibits erythromycin production. Directly represses the expression of SACE_5813, eryAI (encoding polyketide synthase I) and ermE (encoding rRNA methyltransferase), suggesting its direct regulation of the erythromycin biosynthesis gene cluster. May play an important role in regulating secondary metabolism in actinomycetes. This Saccharopolyspora erythraea (strain ATCC 11635 / DSM 40517 / JCM 4748 / NBRC 13426 / NCIMB 8594 / NRRL 2338) protein is HTH-type transcriptional regulator SACE_5812.